We begin with the raw amino-acid sequence, 1010 residues long: ATP-dependent DNA/RNA helicase DHX36 (1010 aa).

The required for recruitment to cytoplasmic stress granules stretch occupies residues Met-1–Gly-54. Positions Met-1–Arg-63 are disordered. A required for the pre-miR-134 transport region spans residues Met-1–Thr-107. Residues Met-1–Met-202 are necessary for nuclear and nucleolar caps localizations. Residues Arg-16 to Gly-51 show a composition bias toward gly residues. The segment at His-56–Lys-78 is DSM (DHX36-specific motif). The segment at His-56–Lys-108 is required for G4-DNA- and G4-RNA-binding. RecA-like domain regions lie at residues Asn-109–Ile-388 and Pro-389–Leu-630. The region spanning Val-219 to Pro-389 is the Helicase ATP-binding domain. Gly-235–Thr-240 is an ATP binding site. A necessary for interaction with single-stranded DNA at the 3'-end of the G4-DNA structure region spans residues Arg-267–Gln-319. The DEAH box signature appears at Asp-336–His-339. Residues Glu-337 and His-339 each coordinate Mg(2+). In terms of domain architecture, Helicase C-terminal spans Ala-479–Arg-649. The necessary for interaction with single-stranded DNA at the 3'-end of the G4-DNA structure stretch occupies residues Trp-500–Ser-559. The Nuclear localization signal signature appears at Asp-519–Met-530. Residues Ser-559 and Arg-604–Arg-607 each bind ATP. The segment at Pro-631 to Val-700 is WH domain. Necessary for interaction with single-stranded DNA at the 3'-end of the G4-DNA structure stretches follow at residues Glu-640 to Pro-699, Asn-851 to Tyr-862, and His-872 to Tyr-902. An OB-fold-like subdomains region spans residues Pro-843–Val-907. Position 949 is an N6-acetyllysine (Lys-949). Ser-965 is modified (phosphoserine).

Found in a multi-helicase-TICAM1 complex at least composed of DHX36, DDX1, DDX21 and TICAM1; this complex exists in resting cells with or without dsRNA poly(I:C) ligand stimulation. Interacts (via C-terminus) with TICAM1 (via TIR domain). Interacts (via C-terminus) with DDX21; this interaction serves as bridges to TICAM1. Interacts with TERT; this interaction is dependent on the ability of DHX36 to bind to the G-quadruplex RNA (G4-RNA) structure present in the telomerase RNA template component (TERC). Interacts with DKC1; this interaction is dependent on the ability of DHX36 to bind to the G4-RNA structure present in TERC. Interacts with PARN; this interaction stimulates PARN to enhance uPA mRNA decay. Interacts with EXOSC3; this interaction occurs in a RNase-insensitive manner. Interacts with EXOSC10; this interaction occurs in a RNase-insensitive manner. Interacts with ILF3; this interaction occurs in a RNA-dependent manner. Interacts with ELAVL1; this interaction occurs in an RNA-dependent manner. Interacts with DDX5; this interaction occurs in a RNA-dependent manner. Interacts with DDX17; this interaction occurs in a RNA-dependent manner. Interacts with HDAC1; this interaction occurs in a RNA-dependent manner. Interacts with HDAC3; this interaction occurs in a RNA-dependent manner. Interacts with HDAC4. Interacts with AGO1. Interacts with AGO2. Interacts with ERCC6. Mg(2+) serves as cofactor.

The protein localises to the nucleus. It localises to the cytoplasm. It is found in the cytosol. Its subcellular location is the stress granule. The protein resides in the nucleus speckle. The protein localises to the chromosome. It localises to the telomere. It is found in the mitochondrion. Its subcellular location is the perikaryon. The protein resides in the cell projection. The protein localises to the dendrite. It localises to the axon. The enzyme catalyses ATP + H2O = ADP + phosphate + H(+). With respect to regulation, ATPase activity is enhanced in the presence of homomeric poly(U) RNAs, but not by double-stranded DNA (dsDNA), double-stranded RNA (dsRNA) and tRNA. Its function is as follows. Multifunctional ATP-dependent helicase that unwinds G-quadruplex (G4) structures. Plays a role in many biological processes such as genomic integrity, gene expression regulations and as a sensor to initiate antiviral responses. G4 structures correspond to helical structures containing guanine tetrads. Binds with high affinity to and unwinds G4 structures that are formed in nucleic acids (G4-DNA and G4-RNA). Plays a role in genomic integrity. Converts the G4-RNA structure present in telomerase RNA template component (TREC) into a double-stranded RNA to promote P1 helix formation that acts as a template boundary ensuring accurate reverse transcription. Plays a role in transcriptional regulation. Resolves G4-DNA structures in promoters of genes, such as YY1, KIT/c-kit and ALPL and positively regulates their expression. Plays a role in post-transcriptional regulation. Unwinds a G4-RNA structure located in the 3'-UTR polyadenylation site of the pre-mRNA TP53 and stimulates TP53 pre-mRNA 3'-end processing in response to ultraviolet (UV)-induced DNA damage. Binds to the precursor-microRNA-134 (pre-miR-134) terminal loop and regulates its transport into the synapto-dendritic compartment. Involved in the pre-miR-134-dependent inhibition of target gene expression and the control of dendritic spine size. Plays a role in the regulation of cytoplasmic mRNA translation and mRNA stability. Binds to both G4-RNA structures and alternative non-quadruplex-forming sequence within the 3'-UTR of the PITX1 mRNA regulating negatively PITX1 protein expression. Binds to both G4-RNA structure in the 5'-UTR and AU-rich elements (AREs) localized in the 3'-UTR of NKX2-5 mRNA to either stimulate protein translation or induce mRNA decay in an ELAVL1-dependent manner, respectively. Also binds to ARE sequences present in several mRNAs mediating exosome-mediated 3'-5' mRNA degradation. Involved in cytoplasmic urokinase-type plasminogen activator (uPA) mRNA decay. Component of a multi-helicase-TICAM1 complex that acts as a cytoplasmic sensor of viral double-stranded RNA (dsRNA) and plays a role in the activation of a cascade of antiviral responses including the induction of pro-inflammatory cytokines via the adapter molecule TICAM1. Required for the early embryonic development and hematopoiesis. Involved in the regulation of cardioblast differentiation and proliferation during heart development. Involved in spermatogonia differentiation. May play a role in ossification. This is ATP-dependent DNA/RNA helicase DHX36 from Bos taurus (Bovine).